The sequence spans 673 residues: Probable lysophospholipase 4 (673 aa).

The N-terminal stretch at 1–19 (MYVNYIGLFAFVQISLTLA) is a signal peptide. N-linked (GlcNAc...) asparagine glycans are attached at residues Asn72, Asn125, Asn191, Asn194, Asn272, Asn301, Asn374, Asn404, Asn409, Asn481, Asn516, Asn545, and Asn574. The PLA2c domain occupies 74–615 (TCSNDNLLRP…QEYCWDGTLA (542 aa)). The interval 631 to 653 (TTSRAPSGTTSGTASSTTSSSVA) is disordered.

It belongs to the lysophospholipase family.

Its subcellular location is the secreted. It carries out the reaction a 1-acyl-sn-glycero-3-phosphocholine + H2O = sn-glycerol 3-phosphocholine + a fatty acid + H(+). Its function is as follows. Catalyzes the release of fatty acids from lysophospholipids. This Schizosaccharomyces pombe (strain 972 / ATCC 24843) (Fission yeast) protein is Probable lysophospholipase 4 (plb4).